The chain runs to 213 residues: mRNA-decapping protein OPG121 (213 aa).

N(7)-methyl-GTP contacts are provided by glutamate 16 and arginine 50. The Nudix hydrolase domain occupies 30-209 (KDTHVFAACI…EYLSYIYNIL (180 aa)). Residues 111–132 (GKLDKKESIKDCLRRELKEESD) carry the Nudix box motif. Mg(2+) is bound by residues glutamate 126 and glutamate 130. Aspartate 151 lines the N(7)-methyl-GTP pocket. Glutamate 183 serves as a coordination point for Mg(2+).

It belongs to the Nudix hydrolase family. Interacts with the late transcription elongation factor VLTF-4/OPG110. Interacts with the late transcription factors VLTF-1. Mg(2+) is required as a cofactor. Mn(2+) serves as cofactor.

The enzyme catalyses a 5'-end (N(7)-methyl 5'-triphosphoguanosine)-guanosine in mRNA + H2O = a 5'-end phospho-guanosine in mRNA + N(7)-methyl-GDP + 2 H(+). Its function is as follows. Acts with RNA polymerase to initiate transcription from late gene promoters. The chain is mRNA-decapping protein OPG121 (OPG121) from Cynomys gunnisoni (Gunnison's prairie dog).